Here is a 298-residue protein sequence, read N- to C-terminus: Protein transport protein SEC13-1 (298 aa).

WD repeat units lie at residues 7-46 (AHND…HKLV), 51-92 (GHEG…WSQI), 97-138 (VHTA…TATP), 143-196 (AHAI…QSYL), 203-245 (GHSD…GPWV), and 253-292 (EFPD…KWES).

Belongs to the WD repeat SEC13 family. In terms of assembly, the COPII coat is composed of at least 5 proteins: the SEC23/24 complex, the SEC13/31 complex, and the protein SAR1. Component of the nuclear pore complex (NPC). NPC constitutes the exclusive means of nucleocytoplasmic transport. NPCs allow the passive diffusion of ions and small molecules and the active, nuclear transport receptor-mediated bidirectional transport of macromolecules such as proteins, RNAs, ribonucleoparticles (RNPs), and ribosomal subunits across the nuclear envelope. Due to its 8-fold rotational symmetry, all subunits are present with 8 copies or multiples thereof.

The protein resides in the cytoplasmic vesicle. It localises to the COPII-coated vesicle membrane. The protein localises to the endoplasmic reticulum membrane. Its subcellular location is the nucleus. It is found in the nuclear pore complex. Its function is as follows. Component of the coat protein complex II (COPII) which promotes the formation of transport vesicles from the endoplasmic reticulum (ER). The coat has two main functions, the physical deformation of the endoplasmic reticulum membrane into vesicles and the selection of cargo molecules. It also functions as a component of the nuclear pore complex (NPC). NPC components, collectively referred to as nucleoporins (NUPs), can play the role of both NPC structural components and of docking or interaction partners for transiently associated nuclear transport factors. SEC13 is required for efficient mRNA export from the nucleus to the cytoplasm and for correct nuclear pore biogenesis and distribution. This chain is Protein transport protein SEC13-1 (SEC131), found in Candida glabrata (strain ATCC 2001 / BCRC 20586 / JCM 3761 / NBRC 0622 / NRRL Y-65 / CBS 138) (Yeast).